Here is a 177-residue protein sequence, read N- to C-terminus: RNA pyrophosphohydrolase (177 aa).

In terms of domain architecture, Nudix hydrolase spans 6-149 (GYRPNVGIVI…KRDVYRRVMK (144 aa)). A Nudix box motif is present at residues 38–59 (GGINPGESAEQAMYRELFEEVG).

It belongs to the Nudix hydrolase family. RppH subfamily. A divalent metal cation is required as a cofactor.

In terms of biological role, accelerates the degradation of transcripts by removing pyrophosphate from the 5'-end of triphosphorylated RNA, leading to a more labile monophosphorylated state that can stimulate subsequent ribonuclease cleavage. In Pectobacterium carotovorum subsp. carotovorum (strain PC1), this protein is RNA pyrophosphohydrolase.